A 558-amino-acid polypeptide reads, in one-letter code: Scarecrow-like protein 6 (558 aa).

The segment at 19–90 (FSSSFPQPPS…GGDATTDEQC (72 aa)) is disordered. Residues 54–75 (SVLDSLISPTSSSTVSSSHGGN) are compositionally biased toward low complexity. Residues 196–554 (KRLNPGPVGI…TELVGVSAWR (359 aa)) form the GRAS domain. Residues 203 to 257 (VGITEQLVKAAEVIESDTCLAQGILARLNQQLSSPVGKPLERAAFYFKEALNNLL) form a leucine repeat I (LRI) region. A VHIID region spans residues 276–340 (YKSFSEISPV…DNAAPLSLKI (65 aa)). The VHIID signature appears at 307 to 311 (LHIID). The interval 356–388 (FTQDNLKHFASEINISLDIQVLSLDLLGSISWP) is leucine repeat II (LRII). The tract at residues 396–479 (VAVNISAASF…RFLIQPEIEK (84 aa)) is PFYRE. The segment at 482-554 (LDRSRPIERP…TELVGVSAWR (73 aa)) is SAW.

This sequence belongs to the GRAS family. As to quaternary structure, interacts with Meloidogyne incognita 16D10. As to expression, expressed in seedlings, roots, leaves, flowers and siliques.

The protein resides in the nucleus. In terms of biological role, probable transcription factor involved in plant development. In Arabidopsis thaliana (Mouse-ear cress), this protein is Scarecrow-like protein 6 (SCL6).